We begin with the raw amino-acid sequence, 401 residues long: NADH-quinone oxidoreductase subunit D (401 aa).

The protein belongs to the complex I 49 kDa subunit family. In terms of assembly, NDH-1 is composed of 14 different subunits. Subunits NuoB, C, D, E, F, and G constitute the peripheral sector of the complex.

The protein localises to the cell inner membrane. The enzyme catalyses a quinone + NADH + 5 H(+)(in) = a quinol + NAD(+) + 4 H(+)(out). In terms of biological role, NDH-1 shuttles electrons from NADH, via FMN and iron-sulfur (Fe-S) centers, to quinones in the respiratory chain. The immediate electron acceptor for the enzyme in this species is believed to be ubiquinone. Couples the redox reaction to proton translocation (for every two electrons transferred, four hydrogen ions are translocated across the cytoplasmic membrane), and thus conserves the redox energy in a proton gradient. This is NADH-quinone oxidoreductase subunit D from Rhodopseudomonas palustris (strain HaA2).